A 44-amino-acid chain; its full sequence is uncharacterized protein (44 aa).

This is an uncharacterized protein from Haemophilus influenzae (strain ATCC 51907 / DSM 11121 / KW20 / Rd).